The primary structure comprises 273 residues: MTVLHSIDFFSSSSAPVAIEARAPQSAFPEHHHDFYEIVIVEEGAGVHVFNGNPYTLSRGCVCFVRDHDRHLFESTDDLFLTNVLFRAPDAFRFLSGVGHFLPRECDGVYPSHWRVNGQVLQQIKCLIACLEHAPKSDQVEDIALHESVFMQLLVKLWQGCQTQAGDDQEGRLYQLLDWLQNNYSEAVEWPELADRFALPLRTLHRQLKNKTGMTPQRYLTRLRLLQARHQLCYSDNSVTDIAYLCGFGDSNHFSTLFKREFSQSPRDLRSQL.

One can recognise an HTH araC/xylS-type domain in the interval 174–272 (YQLLDWLQNN…SQSPRDLRSQ (99 aa)). DNA-binding regions (H-T-H motif) lie at residues 191–212 (PELADRFALPLRTLHRQLKNKT) and 239–262 (VTDIAYLCGFGDSNHFSTLFKREF).

In terms of assembly, binds DNA as a dimer.

The protein resides in the cytoplasm. Functionally, activates expression of the rhaBAD and rhaT operons. This chain is HTH-type transcriptional activator RhaS, found in Yersinia pseudotuberculosis serotype O:1b (strain IP 31758).